The sequence spans 366 residues: NADH-quinone oxidoreductase subunit D (366 aa).

This sequence belongs to the complex I 49 kDa subunit family. As to quaternary structure, NDH-1 is composed of 14 different subunits. Subunits NuoB, C, D, E, F, and G constitute the peripheral sector of the complex.

It is found in the cell membrane. The enzyme catalyses a quinone + NADH + 5 H(+)(in) = a quinol + NAD(+) + 4 H(+)(out). In terms of biological role, NDH-1 shuttles electrons from NADH, via FMN and iron-sulfur (Fe-S) centers, to quinones in the respiratory chain. The immediate electron acceptor for the enzyme in this species is believed to be a menaquinone. Couples the redox reaction to proton translocation (for every two electrons transferred, four hydrogen ions are translocated across the cytoplasmic membrane), and thus conserves the redox energy in a proton gradient. This Bacillus cereus (strain ZK / E33L) protein is NADH-quinone oxidoreductase subunit D.